The primary structure comprises 713 residues: MEGTPNVPQAHRYELTLAGRPLVLETGKYAKQASGSVLVRYADTVVLATAQASETPVEADFLPLTVEFEERHYAVGKIPGSFMRREGRPGEKAILSARMTDRPIRPLFPKGFRHEVQIIVTVLSADQKNPPDILGPIAASAALMLSDIPWEGPIAAVRVGLIGGSFVLNPTLQELEESQLDLVVAGSKEAILMVEAEAGEVDEETLVQALEFAHKEMQPILELQEAMARELAKPKMAWTPPESLPEEEKEALYRLALERGLSQVLQTASKGERSRALAEFAERLIAEALPKGEDGTPDEGKKPLYESAFDEVVRRELRRLVLEEGKRADGRGPKDLRPIWIEVDVLPRAHGSAVFTRGETQVLGTVTLGTGRDEQILDDLGIDETEKFLVHYNFPPFSTGEVRRLRGVSRREVGHGNLAKRALKAVMPKEEDFPYTIRVVGDVLESNGSSSMATVCAGCLALMDAGVPIRAPVAGVAMGLVWEENRAVILTDILGLEDALGDMDFKVAGTRKGVTALQMDNKVGGLPREVLKEALLQAREARLKILDLMEAVLPAPRPELKPFAPRILSLKVPVEKIGLVIGPGGKNVRALEELGVEVDIEEDGTVRIYSSDLQAALEAKKRIEDLTREAKVGEIYEGTVTRITPFGAFISLFPGTEGLLHISQIAPGRVARVEDHLKVGDVIKVKVHRIDERGKIDLIRPELEGKIPPRRRR.

Residues aspartate 498 and aspartate 504 each coordinate Mg(2+). Residues 565 to 631 (PRILSLKVPV…RIEDLTREAK (67 aa)) form the KH domain. The region spanning 633–701 (GEIYEGTVTR…ERGKIDLIRP (69 aa)) is the S1 motif domain.

This sequence belongs to the polyribonucleotide nucleotidyltransferase family. Mg(2+) is required as a cofactor.

It is found in the cytoplasm. It carries out the reaction RNA(n+1) + phosphate = RNA(n) + a ribonucleoside 5'-diphosphate. Its function is as follows. Involved in mRNA degradation. Catalyzes the phosphorolysis of single-stranded polyribonucleotides processively in the 3'- to 5'-direction. This is Polyribonucleotide nucleotidyltransferase from Thermus thermophilus (strain ATCC 27634 / DSM 579 / HB8).